The primary structure comprises 525 residues: Vesicular inhibitory amino acid transporter (525 aa).

Residues 1 to 132 (MATLLRSKLT…WNVTNAIQGM (132 aa)) are Cytoplasmic-facing. A helical transmembrane segment spans residues 133–153 (FVLGLPYAILHGGYLGLFLII). The Lumenal, vesicle portion of the chain corresponds to 154 to 204 (FAAVVCCYTGKILIACLYEENEDGEVVRVRDSYVAIANACCAPRFPTLGGR). Tyr-186 carries the post-translational modification 3'-nitrotyrosine. A helical transmembrane segment spans residues 205–225 (VVNVAQIIELVMTCILYVVVS). The Cytoplasmic segment spans residues 226–265 (GNLMYNSFPGLPVSQKSWSIIATAVLLPCAFLKNLKAVSK). The helical transmembrane segment at 266–286 (FSLLCTLAHFVINILVIAYCL) threads the bilayer. Over 287-305 (SRARDWAWEKVKFYIDVKK) the chain is Lumenal, vesicle. Residues 306-326 (FPISIGIIVFSYTSQIFLPSL) form a helical membrane-spanning segment. At 327–341 (EGNMQQPSEFHCMMN) the chain is on the cytoplasmic side. Residues 342–362 (WTHIAACVLKGLFALVAYLTW) form a helical membrane-spanning segment. Topologically, residues 363-383 (ADETKEVITDNLPGSIRAVVN) are lumenal, vesicle. The chain crosses the membrane as a helical span at residues 384–404 (IFLVAKALLSYPLPFFAAVEV). Residues 405–438 (LEKSLFQEGSRAFFPACYGGDGRLKSWGLTLRCA) lie on the Cytoplasmic side of the membrane. Residues 439 to 459 (LVVFTLLMAIYVPHFALLMGL) form a helical membrane-spanning segment. Topologically, residues 460-461 (TG) are lumenal, vesicle. A helical membrane pass occupies residues 462-482 (SLTGAGLCFLLPSLFHLRLLW). At 483-489 (RKLLWHQ) the chain is on the cytoplasmic side. Residues 490-510 (VFFDVAIFVIGGICSVSGFVH) traverse the membrane as a helical segment. The Lumenal, vesicle segment spans residues 511–525 (SLEGLIEAYRTNAED).

Belongs to the amino acid/polyamine transporter 2 family. As to expression, brain. Expressed at high levels within the neocortex, hippocampus, cerebellum, striatum, septal nuclei and the reticular nucleus of the thalamus. Also expressed in islets where it is more abundant in the peripheral/mantle region. Highly expressed in the nerve endings of GABA neurons in the brain and spinal cord but also in glycinergic nerve endings. Expressed in glycine-, GABA- or GABA- and glycine-containing boutons.

It localises to the cytoplasmic vesicle. The protein resides in the secretory vesicle. The protein localises to the synaptic vesicle membrane. It is found in the presynapse. The enzyme catalyses beta-alanine(out) + n H(+)(in) = beta-alanine(in) + n H(+)(out). The catalysed reaction is 4-aminobutanoate(out) + n H(+)(in) = 4-aminobutanoate(in) + n H(+)(out). It carries out the reaction glycine(out) + n H(+)(in) = glycine(in) + n H(+)(out). Antiporter that exchanges vesicular protons for cytosolic 4-aminobutanoate or to a lesser extend glycine, thus allowing their secretion from nerve terminals. The transport is equally dependent on the chemical and electrical components of the proton gradient. May also transport beta-alanine. Acidification of GABAergic synaptic vesicles is a prerequisite for 4-aminobutanoate uptake. In Rattus norvegicus (Rat), this protein is Vesicular inhibitory amino acid transporter.